A 227-amino-acid chain; its full sequence is Protein SSO0193 (227 aa).

Positions 15-209 (EIGRLLIEIA…ETKPNGSDII (195 aa)) constitute an AMMECR1 domain.

This chain is Protein SSO0193, found in Saccharolobus solfataricus (strain ATCC 35092 / DSM 1617 / JCM 11322 / P2) (Sulfolobus solfataricus).